The sequence spans 793 residues: Kinesin-associated protein 3 (793 aa).

A Phosphoserine modification is found at serine 60. Over residues 103–119 (LPGKEKKEKSSKPKDPP) the composition is skewed to basic and acidic residues. Positions 103 to 123 (LPGKEKKEKSSKPKDPPPFEG) are disordered. 5 ARM repeats span residues 333–373 (FMEN…NLSF), 374–412 (DTGL…HISM), 494–533 (DGPT…NLTI), 578–620 (DDSC…QMVF), and 621–662 (HQAT…IIAE).

As to quaternary structure, interacts with SMC3 subunit of the cohesin complex. Heterotrimer of KIFAP3, KIF3A and KIF3B. Interacts with RAP1GDS1/SMG GDS. Post-translationally, phosphorylated on tyrosine residues by SRC in vitro; this reduces the binding affinity of the protein for RAP1GDS1.

Involved in tethering the chromosomes to the spindle pole and in chromosome movement. Binds to the tail domain of the KIF3A/KIF3B heterodimer to form a heterotrimeric KIF3 complex and may regulate the membrane binding of this complex. The chain is Kinesin-associated protein 3 (Kifap3) from Mus musculus (Mouse).